The following is a 514-amino-acid chain: Anthranilate synthase component 1 (514 aa).

L-tryptophan is bound by residues Thr-40 and 290-292 (PYM). 327 to 328 (GT) serves as a coordination point for chorismate. Glu-360 lines the Mg(2+) pocket. Chorismate contacts are provided by residues Tyr-448, Arg-468, 482-484 (GAG), and Gly-484. Residue Glu-497 coordinates Mg(2+).

It belongs to the anthranilate synthase component I family. Heterotetramer consisting of two non-identical subunits: a beta subunit (TrpG) and a large alpha subunit (TrpE). It depends on Mg(2+) as a cofactor.

The catalysed reaction is chorismate + L-glutamine = anthranilate + pyruvate + L-glutamate + H(+). The protein operates within amino-acid biosynthesis; L-tryptophan biosynthesis; L-tryptophan from chorismate: step 1/5. Feedback inhibited by tryptophan. In terms of biological role, part of a heterotetrameric complex that catalyzes the two-step biosynthesis of anthranilate, an intermediate in the biosynthesis of L-tryptophan. In the first step, the glutamine-binding beta subunit (TrpG) of anthranilate synthase (AS) provides the glutamine amidotransferase activity which generates ammonia as a substrate that, along with chorismate, is used in the second step, catalyzed by the large alpha subunit of AS (TrpE) to produce anthranilate. In the absence of TrpG, TrpE can synthesize anthranilate directly from chorismate and high concentrations of ammonia. In Buchnera aphidicola subsp. Rhopalosiphum padi, this protein is Anthranilate synthase component 1 (trpE).